The primary structure comprises 181 residues: Early E3 20.3 kDa glycoprotein (181 aa).

N-linked (GlcNAc...) asparagine; by host glycans are attached at residues N29, N57, N70, and N75.

It belongs to the adenoviridae E3_20 family.

Its function is as follows. E3 proteins seem to be dispensable for virus growth in tissue culture cells. They are potentially important for virus growth under special conditions; E3 region may help adenoviruses to evade the immune surveillance of the host. The sequence is that of Early E3 20.3 kDa glycoprotein from Human adenovirus B serotype 11 (strain Slobiski) (HAdV-11).